A 130-amino-acid polypeptide reads, in one-letter code: Large ribosomal subunit protein bL12 (130 aa).

This sequence belongs to the bacterial ribosomal protein bL12 family. Homodimer. Part of the ribosomal stalk of the 50S ribosomal subunit. Forms a multimeric L10(L12)X complex, where L10 forms an elongated spine to which 2 to 4 L12 dimers bind in a sequential fashion. Binds GTP-bound translation factors.

Functionally, forms part of the ribosomal stalk which helps the ribosome interact with GTP-bound translation factors. Is thus essential for accurate translation. The chain is Large ribosomal subunit protein bL12 from Thermobifida fusca (strain YX).